The following is a 263-amino-acid chain: tRNA pseudouridine synthase A (263 aa).

D51 (nucleophile) is an active-site residue. Substrate is bound at residue Y106.

It belongs to the tRNA pseudouridine synthase TruA family.

The catalysed reaction is uridine(38/39/40) in tRNA = pseudouridine(38/39/40) in tRNA. Its function is as follows. Formation of pseudouridine at positions 38, 39 and 40 in the anticodon stem and loop of transfer RNAs. The chain is tRNA pseudouridine synthase A from Pyrococcus abyssi (strain GE5 / Orsay).